A 268-amino-acid chain; its full sequence is Peptide transport system ATP-binding protein SapF (268 aa).

The ABC transporter domain maps to 6–251; that stretch reads LEVRNLSKTF…PLHELTKRLI (246 aa). 47-54 contributes to the ATP binding site; sequence GENGSGKS.

This sequence belongs to the ABC transporter superfamily.

It is found in the cell inner membrane. Its function is as follows. Involved in a peptide intake transport system that plays a role in the resistance to antimicrobial peptides. The sequence is that of Peptide transport system ATP-binding protein SapF (sapF) from Escherichia coli O6:H1 (strain CFT073 / ATCC 700928 / UPEC).